The sequence spans 146 residues: Hemoglobin subunit beta (146 aa).

Residues 2–146 (EWTQQERSII…VVFALGRKYH (145 aa)) form the Globin domain. 2 residues coordinate heme b: H63 and H92.

The protein belongs to the globin family. In terms of assembly, heterotetramer of two alpha chains and two beta chains. In terms of tissue distribution, red blood cells.

Functionally, involved in oxygen transport from gills to the various peripheral tissues. The sequence is that of Hemoglobin subunit beta (hbb) from Thunnus thynnus (Atlantic bluefin tuna).